Consider the following 190-residue polypeptide: MARLCAFLMVLAVMSYWPTCCLGCDLPQTHNLRNKRALTLLVKMRRLSPLSCLKDRKDFGFPQAKVDAQQIQEAQAIPVLSELTQQILNIFTSKDSSAAWNATLLDSVCNDLHQQLNDLQGCLMQEVGVQELSLTQEDSLLAVRKYFHRITVFLREKKHSPCAWEVVRAEIWRALSSSANLLARLSEKKE.

Positions 1 to 23 (MARLCAFLMVLAVMSYWPTCCLG) are cleaved as a signal peptide. Intrachain disulfides connect C24/C122 and C52/C162. N-linked (GlcNAc...) asparagine glycosylation is present at N101.

It belongs to the alpha/beta interferon family.

It is found in the secreted. Produced by macrophages, IFN-alpha have antiviral activities. Interferon stimulates the production of two enzymes: a protein kinase and an oligoadenylate synthetase. In Mus musculus (Mouse), this protein is Interferon alpha-7 (Ifna7).